We begin with the raw amino-acid sequence, 275 residues long: Large ribosomal subunit protein uL2c (275 aa).

2 disordered regions span residues 1–28 (MGIRIYRSYTPGTRNRSSSDFSEITKSK) and 227–251 (PCDHPHGGGEGRSPIGRARPVTPWG). Residues 10 to 22 (TPGTRNRSSSDFS) are compositionally biased toward polar residues.

Belongs to the universal ribosomal protein uL2 family. Part of the 50S ribosomal subunit.

It localises to the plastid. Its subcellular location is the chloroplast. The chain is Large ribosomal subunit protein uL2c (rpl2) from Rhodomonas salina (Cryptomonas salina).